The primary structure comprises 130 residues: uncharacterized protein (130 aa).

The region spanning 19–73 (IYSLRLAKGLSRQQLAEVIDVTHQQLQKYEKAINRISVGRLVLIAEALDRNIDYF) is the HTH cro/C1-type domain. A DNA-binding region (H-T-H motif) is located at residues 30–49 (RQQLAEVIDVTHQQLQKYEK).

This is an uncharacterized protein from Rickettsia prowazekii (strain Madrid E).